A 210-amino-acid polypeptide reads, in one-letter code: Rho-related GTP-binding protein RhoD (210 aa).

A GTP-binding site is contributed by 24–31 (GDGGCGKT). The Effector region motif lies at 46–54 (YTPTVFERY). GTP is bound by residues 71–75 (DTAGQ) and 129–132 (CKTD). Cys207 carries the post-translational modification Cysteine methyl ester. Cys207 is lipidated: S-geranylgeranyl cysteine. The propeptide at 208–210 (VVT) is removed in mature form.

This sequence belongs to the small GTPase superfamily. Rho family. In terms of assembly, interacts (in GTP-bound form) with DIAPH2 isoform 3, DAPK3, FILIP1 and WHAMM. Interacts with PAK5. Interacts (independent of GTP-loaded status) with ANKFY1. In terms of tissue distribution, heart, placenta, liver, skeletal muscle, and pancreas and, with weaker intensity, in several other tissues.

The protein resides in the cell membrane. It localises to the early endosome. Functionally, involved in endosome dynamics. May coordinate membrane transport with the function of the cytoskeleton. Involved in the internalization and trafficking of activated tyrosine kinase receptors such as PDGFRB. Participates in the reorganization of actin cytoskeleton; the function seems to involve WHAMM and includes regulation of filopodia formation and actin filament bundling. Can modulate the effect of DAPK3 in reorganization of actin cytoskeleton and focal adhesion dissolution. This chain is Rho-related GTP-binding protein RhoD, found in Homo sapiens (Human).